The primary structure comprises 776 residues: Bifunctional lysine-specific demethylase and histidyl-hydroxylase NO66 (776 aa).

3 disordered regions span residues 1-57 (MGKK…EPKF), 87-126 (EQNG…AHKH), and 165-288 (ILDE…DDEG). 2 stretches are compositionally biased toward basic and acidic residues: residues 47-57 (HYKEPSKEPKF) and 98-119 (EISP…DGVA). Residues 166–204 (LDEEVEDEEIDEEEFEDEEEVEDEEGMDEDETEIDESEM) are compositionally biased toward acidic residues. Over residues 206–216 (VDPKDIERCIE) the composition is skewed to basic and acidic residues. Positions 217–288 (FEDVDDEDEM…EMDADSDDEG (72 aa)) are enriched in acidic residues. Residues 425 to 569 (QLVNPQTFDD…NLMEKVIPEA (145 aa)) form the JmjC domain. The Fe cation site is built by H468, D470, and H535.

This sequence belongs to the ROX family. NO66 subfamily. Fe(2+) serves as cofactor.

It localises to the nucleus. It catalyses the reaction N(6),N(6)-dimethyl-L-lysyl(36)-[histone H3] + 2 2-oxoglutarate + 2 O2 = L-lysyl(36)-[histone H3] + 2 formaldehyde + 2 succinate + 2 CO2. Oxygenase that can act as both a histone lysine demethylase and a ribosomal histidine hydroxylase. Specifically demethylates 'Lys-4' (H3K4me) and 'Lys-36' (H3K36me) of histone H3, thereby playing a central role in histone code. The polypeptide is Bifunctional lysine-specific demethylase and histidyl-hydroxylase NO66 (jmjc-1) (Caenorhabditis briggsae).